The primary structure comprises 1453 residues: Clustered mitochondria protein homolog (1453 aa).

The segment covering 78-101 has biased composition (polar residues); the sequence is LSENGQENSPHNSDSGHETSSPDS. Residues 78–110 are disordered; sequence LSENGQENSPHNSDSGHETSSPDSPLTPIEEGA. A Clu domain is found at 439–690; it reads EDGIRAEDCT…RTFPPDVNYL (252 aa). A disordered region spans residues 979–1015; the sequence is PLTPSNEEVSMPINSVKKSRSSKRRKQISSGGKENDD. Over residues 995 to 1005 the composition is skewed to basic residues; that stretch reads KKSRSSKRRKQ. 2 TPR repeats span residues 1235–1268 and 1277–1310; these read AEID…HQIY and ALIY…YSKT.

Belongs to the CLU family.

Its subcellular location is the cytoplasm. MRNA-binding protein involved in proper cytoplasmic distribution of mitochondria. The sequence is that of Clustered mitochondria protein homolog from Brugia malayi (Filarial nematode worm).